Here is a 63-residue protein sequence, read N- to C-terminus: Large ribosomal subunit protein bL28 (63 aa).

It belongs to the bacterial ribosomal protein bL28 family.

The sequence is that of Large ribosomal subunit protein bL28 from Geotalea daltonii (strain DSM 22248 / JCM 15807 / FRC-32) (Geobacter daltonii).